The sequence spans 119 residues: Large ribosomal subunit protein bL20 (119 aa).

The protein belongs to the bacterial ribosomal protein bL20 family.

In terms of biological role, binds directly to 23S ribosomal RNA and is necessary for the in vitro assembly process of the 50S ribosomal subunit. It is not involved in the protein synthesizing functions of that subunit. This Mycoplasma capricolum subsp. capricolum (strain California kid / ATCC 27343 / NCTC 10154) protein is Large ribosomal subunit protein bL20.